The chain runs to 179 residues: MNRLKEKYQKEIVPSLTEKFNYSSVMAVPKLEKIVVNMGVGDAVQNAKALDKAVEELTEITGQKPIITKAKKSIAGFKLREGMPIGAKVTLRGERMYEFLDKLISVSLPRVRDFRGISKKAFDGRGNYTLGVKEQLIFPEIDYDKVDKVRGMDVVIVTTASTDEEARELLSQMGMPFQK.

The protein belongs to the universal ribosomal protein uL5 family. Part of the 50S ribosomal subunit; part of the 5S rRNA/L5/L18/L25 subcomplex. Contacts the 5S rRNA and the P site tRNA. Forms a bridge to the 30S subunit in the 70S ribosome.

In terms of biological role, this is one of the proteins that bind and probably mediate the attachment of the 5S RNA into the large ribosomal subunit, where it forms part of the central protuberance. In the 70S ribosome it contacts protein S13 of the 30S subunit (bridge B1b), connecting the 2 subunits; this bridge is implicated in subunit movement. Contacts the P site tRNA; the 5S rRNA and some of its associated proteins might help stabilize positioning of ribosome-bound tRNAs. This is Large ribosomal subunit protein uL5 from Halalkalibacterium halodurans (strain ATCC BAA-125 / DSM 18197 / FERM 7344 / JCM 9153 / C-125) (Bacillus halodurans).